A 113-amino-acid chain; its full sequence is MNTVRVTFLLVFVLPVSLGQADKDENRMEMQEKTEQGKSYLDFAENLLLQKLEELEAKLLEEDSEESRNSRQKRCIGEGVPCDENDPRCCSGLVCLKPTLHGIWYKSYYCYKK.

The signal sequence occupies residues 1-21; the sequence is MNTVRVTFLLVFVLPVSLGQA. Residues 22–74 constitute a propeptide that is removed on maturation; sequence DKDENRMEMQEKTEQGKSYLDFAENLLLQKLEELEAKLLEEDSEESRNSRQKR. Basic and acidic residues predominate over residues 60–69; sequence LEEDSEESRN. The tract at residues 60–83 is disordered; sequence LEEDSEESRNSRQKRCIGEGVPCD. Cystine bridges form between Cys-75-Cys-90, Cys-82-Cys-95, and Cys-89-Cys-110.

Belongs to the neurotoxin 14 (magi-1) family. 01 (HNTX-16) subfamily. Expressed by the venom gland.

Its subcellular location is the secreted. Probable ion channel inhibitor. In Cyriopagopus hainanus (Chinese bird spider), this protein is U11-theraphotoxin-Hhn1a.